We begin with the raw amino-acid sequence, 441 residues long: Glutamate--tRNA ligase 2 (441 aa).

The 'HIGH' region motif lies at 9–19 (PSPTGYIHVGN). A 'KMSKS' region motif is present at residues 239–243 (ALSKR). Residue Lys-242 participates in ATP binding.

It belongs to the class-I aminoacyl-tRNA synthetase family. Glutamate--tRNA ligase type 1 subfamily. In terms of assembly, monomer.

The protein localises to the cytoplasm. It carries out the reaction tRNA(Glu) + L-glutamate + ATP = L-glutamyl-tRNA(Glu) + AMP + diphosphate. Catalyzes the attachment of glutamate to tRNA(Glu) in a two-step reaction: glutamate is first activated by ATP to form Glu-AMP and then transferred to the acceptor end of tRNA(Glu). This chain is Glutamate--tRNA ligase 2, found in Cereibacter sphaeroides (strain ATCC 17029 / ATH 2.4.9) (Rhodobacter sphaeroides).